We begin with the raw amino-acid sequence, 600 residues long: UvrABC system protein C (600 aa).

Positions 15 to 100 (NSAGVYQYFN…IKQLHPKYNI (86 aa)) constitute a GIY-YIG domain. Positions 203-238 (SVLLKNLEKQMLVLAQNENYEEAAKVRDQIAMIKDL) constitute a UVR domain.

Belongs to the UvrC family. As to quaternary structure, interacts with UvrB in an incision complex.

Its subcellular location is the cytoplasm. Functionally, the UvrABC repair system catalyzes the recognition and processing of DNA lesions. UvrC both incises the 5' and 3' sides of the lesion. The N-terminal half is responsible for the 3' incision and the C-terminal half is responsible for the 5' incision. This is UvrABC system protein C from Campylobacter jejuni (strain RM1221).